The primary structure comprises 235 residues: Phosphoribosylaminoimidazole-succinocarboxamide synthase (235 aa).

Belongs to the SAICAR synthetase family.

The enzyme catalyses 5-amino-1-(5-phospho-D-ribosyl)imidazole-4-carboxylate + L-aspartate + ATP = (2S)-2-[5-amino-1-(5-phospho-beta-D-ribosyl)imidazole-4-carboxamido]succinate + ADP + phosphate + 2 H(+). It participates in purine metabolism; IMP biosynthesis via de novo pathway; 5-amino-1-(5-phospho-D-ribosyl)imidazole-4-carboxamide from 5-amino-1-(5-phospho-D-ribosyl)imidazole-4-carboxylate: step 1/2. This Lachnoclostridium phytofermentans (strain ATCC 700394 / DSM 18823 / ISDg) (Clostridium phytofermentans) protein is Phosphoribosylaminoimidazole-succinocarboxamide synthase.